Consider the following 429-residue polypeptide: MANVVVVGSQWGDEGKGKIVDWLSERADVIVRYQGGHNAGHTLVIDGVSYKLSLLPSGLVRGKLSVIGNGVVVDPHHFVAEVEKLRGQGIDVTPDVLRVAENAPLILSIHRELDAMREGSNSGLKIGTTKRGIGPAYEDKVGRRAIRVIDLTEPETLRPKVERLLAHHNSLRRGMGLEEIAVETILTELTSVADQILPYIDQVWRVLDERRKAGARILFEGAQGALLDNDHGTYPFVTSSNTVAGQAAAGSGLGPTAIGYVLGITKAYTTRVGEGPFPTELNDEIGEFLGTKGHEFGVVTGRKRRCGWFDAVIVRQTVRTSGINGIALTKLDVLDGLEEIKICVAYELDGKRIDYLPSSMGAQARVKPIYETLPGWSETTAGARSWNDLPAQAVKYVRHIEELIGAPVAMLSTSPEREDTILVTDPFHD.

Residues glycine 12–lysine 18 and glycine 40–threonine 42 contribute to the GTP site. Residue aspartate 13 is the Proton acceptor of the active site. Residues aspartate 13 and glycine 40 each contribute to the Mg(2+) site. IMP-binding positions include aspartate 13 to lysine 16, asparagine 38 to histidine 41, threonine 129, arginine 143, glutamine 223, threonine 238, and arginine 302. The active-site Proton donor is the histidine 41. Valine 298–arginine 304 contributes to the substrate binding site. GTP-binding positions include arginine 304, lysine 330–aspartate 332, and serine 412–serine 414.

It belongs to the adenylosuccinate synthetase family. In terms of assembly, homodimer. Requires Mg(2+) as cofactor.

It localises to the cytoplasm. It carries out the reaction IMP + L-aspartate + GTP = N(6)-(1,2-dicarboxyethyl)-AMP + GDP + phosphate + 2 H(+). Its pathway is purine metabolism; AMP biosynthesis via de novo pathway; AMP from IMP: step 1/2. Its function is as follows. Plays an important role in the de novo pathway of purine nucleotide biosynthesis. Catalyzes the first committed step in the biosynthesis of AMP from IMP. The chain is Adenylosuccinate synthetase from Brucella abortus (strain 2308).